Here is a 118-residue protein sequence, read N- to C-terminus: NADH-quinone oxidoreductase subunit A (118 aa).

3 helical membrane passes run 6-26 (LIIG…LLTA), 61-81 (FMYG…LPWA), and 87-107 (LGLF…IGLW).

Belongs to the complex I subunit 3 family. In terms of assembly, NDH-1 is composed of 14 different subunits. Subunits NuoA, H, J, K, L, M, N constitute the membrane sector of the complex.

The protein localises to the cell membrane. The catalysed reaction is a quinone + NADH + 5 H(+)(in) = a quinol + NAD(+) + 4 H(+)(out). Its function is as follows. NDH-1 shuttles electrons from NADH, via FMN and iron-sulfur (Fe-S) centers, to quinones in the respiratory chain. The immediate electron acceptor for the enzyme in this species is believed to be a menaquinone. Couples the redox reaction to proton translocation (for every two electrons transferred, four hydrogen ions are translocated across the cytoplasmic membrane), and thus conserves the redox energy in a proton gradient. This chain is NADH-quinone oxidoreductase subunit A, found in Clostridium beijerinckii (strain ATCC 51743 / NCIMB 8052) (Clostridium acetobutylicum).